A 147-amino-acid chain; its full sequence is Angiogenin (147 aa).

The first 24 residues, 1–24 (MVMGLGVLLLVFVLGLGLTPPTLA), serve as a signal peptide directing secretion. Gln-25 is modified (pyrrolidone carboxylic acid). The active-site Proton acceptor is the His-37. The tRNA site is built by Arg-45 and Asp-46. 3 disulfides stabilise this stretch: Cys-50–Cys-105, Cys-63–Cys-116, and Cys-81–Cys-131. A Nucleolar localization signal motif is present at residues 55 to 59 (RRRGL). TRNA is bound by residues Cys-105 and Val-127. The Proton donor role is filled by His-138.

Belongs to the pancreatic ribonuclease family. In terms of assembly, homodimer. Interacts with RNH1; inhibiting ANG ribonuclease activity. Interacts with PCNA.

The protein resides in the secreted. Its subcellular location is the nucleus. The protein localises to the nucleolus. It localises to the cytoplasm. It is found in the stress granule. Has weak tRNA ribonuclease activity by itself due to partial autoinhibition by its C-terminus, which folds into a short alpha-helix that partially occludes the substrate-binding site. In absence of stress, the ribonuclease activity is inhibited by RNH1 in the cytoplasm. In response to stress, dissociates from RNH1 in the cytoplasm and associates with cytoplasmic ribosomes with vacant A-sites: ribosomes directly activate the tRNA ribonuclease activity of ANG by refolding the C-terminal alpha-helix. In response to stress, the angiogenic activity of ANG is inhibited by RNH1 in the nucleus. Secreted ribonuclease that can either promote or restrict cell proliferation of target cells, depending on the context. Endocytosed in target cells via its receptor PLXNB2 and translocates to the cytoplasm or nucleus. Under stress conditions, localizes to the cytoplasm and promotes the assembly of stress granules (SGs): specifically cleaves a subset of tRNAs within anticodon loops to produce tRNA-derived stress-induced fragments (tiRNAs), resulting in translation repression and inhibition of cell proliferation. tiRNas also prevent formation of apoptosome, thereby promoting cell survival. Preferentially cleaves RNAs between a pyrimidine and an adenosine residue, suggesting that it cleaves the anticodon loop of tRNA(Ala) (32-UUAGCAU-38) after positions 33 and 36. Cleaves a subset of tRNAs, including tRNA(Ala), tRNA(Glu), tRNA(Gly), tRNA(Lys), tRNA(Val), tRNA(His), tRNA(Asp) and tRNA(Sec). Under growth conditions and in differentiated cells, translocates to the nucleus and stimulates ribosomal RNA (rRNA) transcription, including that containing the initiation site sequences of 45S rRNA, thereby promoting cell growth and proliferation. Angiogenin induces vascularization of normal and malignant tissues via its ability to promote rRNA transcription. Involved in hematopoietic stem and progenitor cell (HSPC) growth and survival by promoting rRNA transcription in growth conditions and inhibiting translation in response to stress, respectively. Mediates the crosstalk between myeloid and intestinal epithelial cells to protect the intestinal epithelial barrier integrity: secreted by myeloid cells and promotes intestinal epithelial cells proliferation and survival. Also mediates osteoclast-endothelial cell crosstalk in growing bone: produced by osteoclasts and protects the neighboring vascular cells against senescence by promoting rRNA transcription. This Pan troglodytes (Chimpanzee) protein is Angiogenin (ANG).